Reading from the N-terminus, the 77-residue chain is U8-lycotoxin-Ls1b (77 aa).

The first 20 residues, 1 to 20 (MKLIIFTGLVLFAIVSLIEA), serve as a signal peptide directing secretion. A propeptide spanning residues 21-26 (QAENEK) is cleaved from the precursor.

Belongs to the neurotoxin 19 (CSTX) family. 08 (U8-Lctx) subfamily. Contains 4 disulfide bonds. Expressed by the venom gland.

Its subcellular location is the secreted. This chain is U8-lycotoxin-Ls1b, found in Lycosa singoriensis (Wolf spider).